Here is a 1268-residue protein sequence, read N- to C-terminus: uncharacterized protein (1268 aa).

A compositionally biased stretch (low complexity) spans 191–206 (KIVSVKPSKSSQQVDV). Disordered regions lie at residues 191–235 (KIVS…SKKK) and 253–273 (NCRS…SKGC). The span at 223 to 235 (RKPEKSSQDSKKK) shows a compositional bias: basic and acidic residues. Residues 239 to 256 (PTCFYCNKKGHYATNCRS) form a CCHC-type zinc finger. The Reverse transcriptase domain maps to 465–644 (EMGVIVPITY…KQVTFLGFVD (180 aa)). Residues 844 to 997 (VPEAPWKRIH…TPAECHFGRK (154 aa)) form the Integrase catalytic domain. Residues 1092-1268 (GDYSRSSVNP…RRERVRTTWR (177 aa)) are disordered. Composition is skewed to polar residues over residues 1127–1143 (VTSN…SRIT) and 1160–1169 (GSCSPTNNDV). Low complexity predominate over residues 1208-1221 (PSTSTGTPRGSTST). The segment covering 1222–1249 (QLGQASTRNGSRYTASGRNPSCQGNRYS) has biased composition (polar residues). A compositionally biased stretch (basic and acidic residues) spans 1257–1268 (TARRERVRTTWR).

This is an uncharacterized protein from Caenorhabditis elegans.